The chain runs to 360 residues: Phospho-N-acetylmuramoyl-pentapeptide-transferase (360 aa).

The next 10 membrane-spanning stretches (helical) occupy residues isoleucine 27–tryptophan 47, proline 72–tyrosine 92, serine 94–valine 114, tryptophan 132–glycine 152, isoleucine 168–serine 188, glycine 199–threonine 219, alanine 236–phenylalanine 256, valine 263–leucine 283, phenylalanine 288–valine 308, and valine 338–lysine 358.

This sequence belongs to the glycosyltransferase 4 family. MraY subfamily. The cofactor is Mg(2+).

It localises to the cell inner membrane. It carries out the reaction UDP-N-acetyl-alpha-D-muramoyl-L-alanyl-gamma-D-glutamyl-meso-2,6-diaminopimeloyl-D-alanyl-D-alanine + di-trans,octa-cis-undecaprenyl phosphate = di-trans,octa-cis-undecaprenyl diphospho-N-acetyl-alpha-D-muramoyl-L-alanyl-D-glutamyl-meso-2,6-diaminopimeloyl-D-alanyl-D-alanine + UMP. It functions in the pathway cell wall biogenesis; peptidoglycan biosynthesis. Catalyzes the initial step of the lipid cycle reactions in the biosynthesis of the cell wall peptidoglycan: transfers peptidoglycan precursor phospho-MurNAc-pentapeptide from UDP-MurNAc-pentapeptide onto the lipid carrier undecaprenyl phosphate, yielding undecaprenyl-pyrophosphoryl-MurNAc-pentapeptide, known as lipid I. This Edwardsiella ictaluri (strain 93-146) protein is Phospho-N-acetylmuramoyl-pentapeptide-transferase.